A 203-amino-acid polypeptide reads, in one-letter code: MSSESDSPTPQTPPAQPAASQPKADSPLMEGIKTIGLSVVLALGIRTFVAEARYIPSESMLPTLEVNDRLIVEKISYHFNPPRRGDIIVFHPTEALKQQNPSLNEAFIKRVIGLPGETVQVTGGRVLINGQPLEENYIQSPPDYQWGPEKVPADSFLVLGDNRNNSYDSHFWGYVPRQNIIGRAVVRFWPVNRLGELGPPPSY.

The segment at 1–26 is disordered; the sequence is MSSESDSPTPQTPPAQPAASQPKADS. Residues 1 to 33 are Cytoplasmic-facing; that stretch reads MSSESDSPTPQTPPAQPAASQPKADSPLMEGIK. The span at 17–26 shows a compositional bias: low complexity; that stretch reads PAASQPKADS. Residues 34 to 50 form a helical membrane-spanning segment; that stretch reads TIGLSVVLALGIRTFVA. Topologically, residues 51-203 are extracellular; the sequence is EARYIPSESM…LGELGPPPSY (153 aa). Residues S59 and K109 contribute to the active site.

Belongs to the peptidase S26 family.

The protein localises to the cell membrane. The catalysed reaction is Cleavage of hydrophobic, N-terminal signal or leader sequences from secreted and periplasmic proteins.. This is Signal peptidase I (lepB) from Leptolyngbya laminosa (Phormidium laminosum).